The sequence spans 906 residues: Protein translocase subunit SecA (906 aa).

Residues Gln-87, Gly-105–Thr-109, and Asp-507 each bind ATP. The segment covering Arg-553–Leu-563 has biased composition (basic and acidic residues). 2 disordered regions span residues Arg-553–Ser-576 and Leu-854–Ala-906. Residues Cys-890, Cys-892, Cys-901, and His-902 each contribute to the Zn(2+) site. The segment covering Lys-896–Ala-906 has biased composition (basic residues).

Belongs to the SecA family. Monomer and homodimer. Part of the essential Sec protein translocation apparatus which comprises SecA, SecYEG and auxiliary proteins SecDF-YajC and YidC. Requires Zn(2+) as cofactor.

The protein resides in the cell inner membrane. The protein localises to the cytoplasm. The enzyme catalyses ATP + H2O + cellular proteinSide 1 = ADP + phosphate + cellular proteinSide 2.. Functionally, part of the Sec protein translocase complex. Interacts with the SecYEG preprotein conducting channel. Has a central role in coupling the hydrolysis of ATP to the transfer of proteins into and across the cell membrane, serving both as a receptor for the preprotein-SecB complex and as an ATP-driven molecular motor driving the stepwise translocation of polypeptide chains across the membrane. The polypeptide is Protein translocase subunit SecA (Methylococcus capsulatus (strain ATCC 33009 / NCIMB 11132 / Bath)).